The following is a 144-amino-acid chain: Apidaecins type 22 (144 aa).

The signal sequence occupies residues 1–19 (MKNFALAILVVTFVVAVFG). 4 propeptides span residues 20 to 42 (NTNL…EAEP), 63 to 70 (EAEPEAEP), 91 to 98 (EAEPEAEP), and 119 to 126 (EAEPEAEP). Residues 20-144 (NTNLDPPTRP…PQPRPPHPRI (125 aa)) are disordered. Pro residues predominate over residues 134-144 (IPQPRPPHPRI).

It belongs to the apidaecin family.

It localises to the secreted. Functionally, apidaecins have bactericidal activity; predominantly against Gram-negative bacteria. They seem to interfere with cell propagation. The polypeptide is Apidaecins type 22 (Apis mellifera (Honeybee)).